Consider the following 298-residue polypeptide: GTPase Era (298 aa).

Residues 4-171 (KSGFVSIVGR…VEGIFELLPE (168 aa)) form the Era-type G domain. Positions 12 to 19 (GRPNVGKS) are G1. Residue 12 to 19 (GRPNVGKS) participates in GTP binding. Residues 38-42 (QTTRN) form a G2 region. Residues 59–62 (DTPG) form a G3 region. GTP contacts are provided by residues 59–63 (DTPGV) and 121–124 (NKID). Residues 121–124 (NKID) are G4. Residues 150-152 (ISA) form a G5 region. The KH type-2 domain occupies 202 to 280 (TREEIPHSVA…YLDLWVKVKE (79 aa)).

This sequence belongs to the TRAFAC class TrmE-Era-EngA-EngB-Septin-like GTPase superfamily. Era GTPase family. In terms of assembly, monomer.

Its subcellular location is the cytoplasm. The protein localises to the cell membrane. In terms of biological role, an essential GTPase that binds both GDP and GTP, with rapid nucleotide exchange. Plays a role in 16S rRNA processing and 30S ribosomal subunit biogenesis and possibly also in cell cycle regulation and energy metabolism. This chain is GTPase Era, found in Carboxydothermus hydrogenoformans (strain ATCC BAA-161 / DSM 6008 / Z-2901).